The chain runs to 348 residues: Phosphoribosylformylglycinamidine cyclo-ligase (348 aa).

Belongs to the AIR synthase family.

The protein resides in the cytoplasm. It carries out the reaction 2-formamido-N(1)-(5-O-phospho-beta-D-ribosyl)acetamidine + ATP = 5-amino-1-(5-phospho-beta-D-ribosyl)imidazole + ADP + phosphate + H(+). Its pathway is purine metabolism; IMP biosynthesis via de novo pathway; 5-amino-1-(5-phospho-D-ribosyl)imidazole from N(2)-formyl-N(1)-(5-phospho-D-ribosyl)glycinamide: step 2/2. The sequence is that of Phosphoribosylformylglycinamidine cyclo-ligase from Geotalea daltonii (strain DSM 22248 / JCM 15807 / FRC-32) (Geobacter daltonii).